A 542-amino-acid chain; its full sequence is ABC transport system permease protein p69 (542 aa).

12 helical membrane-spanning segments follow: residues 23–43 (ALAIIVLVVIIYSFIDNFSGF), 77–97 (IFYVVSGSILGFVIALWFSYL), 114–134 (FTIFLRSFPVLVFAFLFNNLF), 140–160 (ATLTITWFSWLWSTKYITAFF), 212–232 (LSIAGITGIGELIATPLGGTV), 236–256 (LVLIPMLTLIGFLLFLEASVF), 287–307 (VMIYILALVLAAFTLANLVQL), 350–370 (TQAISLITLVFVLALLFGFLA), 386–406 (LLVIRVIPSVLLFRLFDPIIF), 412–432 (IIFVLAIHSAASYGQLITINF), 481–501 (LVVFGIFGGSIIGGRINNFFE), and 509–529 (GTITLPLMVYLMVFEVILMAV). The 178-residue stretch at 349-526 (TTQAISLITL…VYLMVFEVIL (178 aa)) folds into the ABC transmembrane type-1 domain.

Belongs to the binding-protein-dependent transport system permease family.

It localises to the cell membrane. Its function is as follows. Probably part of a high-affinity transport system. This chain is ABC transport system permease protein p69 (p69), found in Mycoplasma pneumoniae (strain ATCC 29342 / M129 / Subtype 1) (Mycoplasmoides pneumoniae).